Here is a 446-residue protein sequence, read N- to C-terminus: B3 domain-containing protein REM12 (446 aa).

Positions 1–46 are disordered; that stretch reads MVLNSSDLGPSRCDIRDLPAPSSTNDQGKTELARKKKVKRSNTEIE. DNA-binding regions (TF-B3) lie at residues 56-153 and 193-289; these read CFVA…FCST and FMTL…VNTQ. A disordered region spans residues 295 to 334; it reads SQQGECSRDSEKESSICAEPSRGNKKWKATNNRKERRDSS. Residues 341-435 constitute a DNA-binding region (TF-B3 3); it reads YVTLTLTPED…TTPVFKFCSN (95 aa).

The protein localises to the nucleus. The protein is B3 domain-containing protein REM12 (REM12) of Arabidopsis thaliana (Mouse-ear cress).